A 311-amino-acid polypeptide reads, in one-letter code: Catabolite control protein B (311 aa).

The HTH lacI-type domain maps to 1-56 (MANIKEIARLANVSVSTVSRVLNHHPYVSEEKRKLVHQVMKELDYTPNRTAIDLIR). A DNA-binding region (H-T-H motif) is located at residues 4 to 23 (IKEIARLANVSVSTVSRVLN).

In terms of assembly, seems to be complexed to phosphorylated HPr.

Its function is as follows. Transcriptional regulator involved in catabolite repression of several operons. This is Catabolite control protein B (ccpB) from Bacillus subtilis (strain 168).